The sequence spans 361 residues: Thymidine kinase (361 aa).

17–24 is a binding site for ATP; sequence GPHGVGKS. The active-site Proton acceptor is the glutamate 46. Substrate is bound by residues tyrosine 64 and glutamine 88. Residue arginine 184 coordinates ATP. Arginine 190 serves as a coordination point for substrate.

The protein belongs to the herpesviridae thymidine kinase family. Homodimer.

It carries out the reaction thymidine + ATP = dTMP + ADP + H(+). In terms of biological role, catalyzes the transfer of the gamma-phospho group of ATP to thymidine to generate dTMP in the salvage pathway of pyrimidine synthesis. The dTMP serves as a substrate for DNA polymerase during viral DNA replication. Allows the virus to be reactivated and to grow in non-proliferative cells lacking a high concentration of phosphorylated nucleic acid precursors. This Saimiriine herpesvirus 1 (strain MV-5-4-PSL) (SaHV-1) protein is Thymidine kinase.